The sequence spans 471 residues: Chromosomal replication initiator protein DnaA (471 aa).

The interval Met-1–Lys-77 is domain I, interacts with DnaA modulators. A domain II region spans residues Lys-77–Asp-130. Residues Thr-131–Ser-349 are domain III, AAA+ region. ATP contacts are provided by Gly-176, Gly-178, Lys-179, and Thr-180. A domain IV, binds dsDNA region spans residues Glu-350 to Val-471.

This sequence belongs to the DnaA family. In terms of assembly, oligomerizes as a right-handed, spiral filament on DNA at oriC.

Its subcellular location is the cytoplasm. Plays an essential role in the initiation and regulation of chromosomal replication. ATP-DnaA binds to the origin of replication (oriC) to initiate formation of the DNA replication initiation complex once per cell cycle. Binds the DnaA box (a 9 base pair repeat at the origin) and separates the double-stranded (ds)DNA. Forms a right-handed helical filament on oriC DNA; dsDNA binds to the exterior of the filament while single-stranded (ss)DNA is stabiized in the filament's interior. The ATP-DnaA-oriC complex binds and stabilizes one strand of the AT-rich DNA unwinding element (DUE), permitting loading of DNA polymerase. After initiation quickly degrades to an ADP-DnaA complex that is not apt for DNA replication. Binds acidic phospholipids. The sequence is that of Chromosomal replication initiator protein DnaA from Bdellovibrio bacteriovorus (strain ATCC 15356 / DSM 50701 / NCIMB 9529 / HD100).